A 265-amino-acid polypeptide reads, in one-letter code: MRILVSNDDGIYSSGLWALVKRLKEVGEVVVVAPDREQSATGTQVTLRQPLRVQKTHPLIPGIEAYSVEGSPCDCVIMGLAKLITEPVDLVVSGINHGLNLGDDVLISGTVGAALQGYLRNIPSIAISIPVTAEEPENLDSAACITAEIARRIQSGHISKNSFLNINTPDLPLCRINELRVTPLAHKTHIETVEEGHDGRKRYFWLRRRQLSPADNNETDIWAVENGLISISALHERLFQQPPFMLEDTETAGILASARALQDII.

Residues aspartate 8, aspartate 9, serine 39, and asparagine 96 each coordinate a divalent metal cation.

Belongs to the SurE nucleotidase family. Requires a divalent metal cation as cofactor.

Its subcellular location is the cytoplasm. The enzyme catalyses a ribonucleoside 5'-phosphate + H2O = a ribonucleoside + phosphate. Nucleotidase that shows phosphatase activity on nucleoside 5'-monophosphates. This chain is 5'-nucleotidase SurE, found in Dehalococcoides mccartyi (strain ATCC BAA-2266 / KCTC 15142 / 195) (Dehalococcoides ethenogenes (strain 195)).